The following is a 294-amino-acid chain: Nucleotide-binding protein CPF_0343 (294 aa).

Residue 8–15 participates in ATP binding; the sequence is GLSGAGKT. 59 to 62 lines the GTP pocket; it reads DIRG.

This sequence belongs to the RapZ-like family.

In terms of biological role, displays ATPase and GTPase activities. The protein is Nucleotide-binding protein CPF_0343 of Clostridium perfringens (strain ATCC 13124 / DSM 756 / JCM 1290 / NCIMB 6125 / NCTC 8237 / Type A).